Here is a 935-residue protein sequence, read N- to C-terminus: Potassium channel AKT1 (935 aa).

The Cytoplasmic segment spans residues 1–106 (MARWGAARMA…YDRRYRIWET (106 aa)). The helical transmembrane segment at 107–127 (FLIVLVVYSAWVSPFEFGFIP) threads the bilayer. Residues 128-136 (KPTGALATA) lie on the Extracellular side of the membrane. Residues 137-157 (DNVVNAFFAVDIILTFFVAYL) traverse the membrane as a helical segment. Residues 158–178 (DKMSYMLEDDPKKIAWRYSTT) lie on the Cytoplasmic side of the membrane. Residues 179-199 (WLVLDVASTIPSEFARRILPS) form a helical membrane-spanning segment. At 200–205 (KLRSYG) the chain is on the extracellular side. The chain crosses the membrane as a helical; Voltage-sensor span at residues 206–226 (FFNMLRLWRLRRVSSLFSRLE). Topologically, residues 227–240 (KDRHFNYFWVRCAK) are cytoplasmic. The helical transmembrane segment at 241 to 261 (LICVTLFAVHCAACFYYLLAD) threads the bilayer. Residues 262 to 288 (RYPVPTSTWIGNYMADFHERSLWIRYV) are Extracellular-facing. Positions 289-308 (TSVYWSITTLTTVGYGDLHA) form an intramembrane region, pore-forming. The Extracellular portion of the chain corresponds to 309–312 (ENTR). A helical transmembrane segment spans residues 313–333 (EMIFNIFYMLFNLGLTAYLIG). Residues 334–935 (NMTNLVVHGT…WDAEKMKGKS (602 aa)) are Cytoplasmic-facing. 419-538 (LFQGVSNDLI…TIIMNNLIQF (120 aa)) provides a ligand contact to a nucleoside 3',5'-cyclic phosphate. ANK repeat units follow at residues 565–594 (DLPI…DPNE), 598–627 (DGHT…DPNA), 631–660 (EGKV…DLSS), 662–691 (DTGL…DVNR), 695–724 (DGTT…DIDK), and 728–757 (NGWT…ATAS). Residues 826-854 (SQAQRETDHPLSRGGLAATGSPNPSSGSR) are disordered. Over residues 845 to 854 (GSPNPSSGSR) the composition is skewed to polar residues. Residues 859-935 (RVTISCPEKG…WDAEKMKGKS (77 aa)) form the KHA domain.

This sequence belongs to the potassium channel family. Plant (TC 1.A.1.4) subfamily. As to quaternary structure, the potassium channel is probably a homo- or heterotetrameric complex of pore-forming subunits. In terms of tissue distribution, highly expressed in the epidermis and endodermis of roots, and at lower level in cells of the vasculature and the cortex. Expressed in xylem parenchyma, phloem and mesophyll cells of leaves.

Its subcellular location is the membrane. Highly selective inward-rectifying potassium channel that mediates potassium uptake by plant roots. This chain is Potassium channel AKT1 (AKT1), found in Oryza sativa subsp. indica (Rice).